The primary structure comprises 793 residues: WASP homolog-associated protein with actin, membranes and microtubules (793 aa).

The tract at residues Met-1–Ile-253 is mediates association with membranes. The mediates interaction with microtubules stretch occupies residues Leu-254–Ser-623. 2 coiled-coil regions span residues Arg-265–Asp-290 and Leu-445–His-503. 2 disordered regions span residues Ser-556–Gly-661 and Glu-675–Met-699. Residues Ser-566 to Ala-579 show a composition bias toward basic residues. Positions Ser-618–Asp-628 are enriched in polar residues. A mediates actin nucleation region spans residues Gly-624–Arg-793. The span at Pro-632–Pro-654 shows a compositional bias: pro residues. 2 consecutive WH2 domains span residues Ser-698–Val-716 and Val-728–Val-745. The stretch at Lys-755–Glu-785 forms a coiled coil. The interval Ile-772 to Arg-793 is disordered. The span at Asp-778 to Ser-787 shows a compositional bias: acidic residues. Ser-779 bears the Phosphoserine mark.

Interacts with ACTR3; indicative for an association with the ARP2/3 complex. Associates with microtubules; in vitro binds to tubulin heterodimer in a 1:1 stoichiometry; decorates microtubules with a repeat of 80 A along protofilaments. Interacts with RHOD (in GTP-bound form).

It is found in the cytoplasm. Its subcellular location is the endoplasmic reticulum-Golgi intermediate compartment. The protein resides in the cytoplasmic vesicle membrane. The protein localises to the golgi apparatus. It localises to the cis-Golgi network. Acts as a nucleation-promoting factor (NPF) that stimulates Arp2/3-mediated actin polymerization both at the Golgi apparatus and along tubular membranes. Involved as a regulator of Golgi positioning and morphology. Its activity in membrane tubulation requires F-actin and interaction with microtubules. Proposed to use coordinated actin-nucleating and microtubule-binding activities of distinct WHAMM molecules to drive membrane tubule elongation; when MT-bound can recruit and remodel membrane vesicles but is prevented to activate the Arp2/3 complex. Required for RhoD-dependent actin reorganization such as in cell adhesion and cell migration. Participates in vesicle transport between the endoplasmic reticulum and the Golgi complex. The sequence is that of WASP homolog-associated protein with actin, membranes and microtubules (Whamm) from Mus musculus (Mouse).